A 326-amino-acid polypeptide reads, in one-letter code: Glycolipid sulfotransferase MRA_1383 (326 aa).

Residue 40-45 (KSGLTW) coordinates 3'-phosphoadenylyl sulfate. Histidine 97 functions as the Proton acceptor in the catalytic mechanism. Residue 116-124 (RDPRDAAVS) participates in 3'-phosphoadenylyl sulfate binding.

The protein belongs to the sulfotransferase 1 family.

Functionally, involved in the synthesis of cell wall sulfolipids. In Mycobacterium tuberculosis (strain ATCC 25177 / H37Ra), this protein is Glycolipid sulfotransferase MRA_1383.